A 239-amino-acid polypeptide reads, in one-letter code: 1-(5-phosphoribosyl)-5-[(5-phosphoribosylamino)methylideneamino] imidazole-4-carboxamide isomerase (239 aa).

The Proton acceptor role is filled by Asp8. The active-site Proton donor is Asp129.

The protein belongs to the HisA/HisF family.

The protein resides in the cytoplasm. The catalysed reaction is 1-(5-phospho-beta-D-ribosyl)-5-[(5-phospho-beta-D-ribosylamino)methylideneamino]imidazole-4-carboxamide = 5-[(5-phospho-1-deoxy-D-ribulos-1-ylimino)methylamino]-1-(5-phospho-beta-D-ribosyl)imidazole-4-carboxamide. It participates in amino-acid biosynthesis; L-histidine biosynthesis; L-histidine from 5-phospho-alpha-D-ribose 1-diphosphate: step 4/9. The sequence is that of 1-(5-phosphoribosyl)-5-[(5-phosphoribosylamino)methylideneamino] imidazole-4-carboxamide isomerase from Bacillus cereus (strain ATCC 10987 / NRS 248).